The following is a 669-amino-acid chain: Small ribosomal subunit protein mS39 (669 aa).

The transit peptide at 1–13 directs the protein to the mitochondrion; the sequence is MAAPCVRLGSVRC. 11 PPR repeats span residues 129–163, 164–199, 209–239, 240–274, 275–314, 315–351, 352–392, 396–430, 438–472, 473–507, and 556–590; these read IEGV…GTAP, SLET…DDQD, RPGQ…MPER, NAHS…RLTA, DVQT…NVRP, NLLT…NIEP, SLGT…FTLR, DVYF…DNRG, QSTY…LYYP, NSRG…GHSN, and SSAS…HRVP. The segment at 186-218 is disordered; sequence DIQTSEQNQQDDQDQQETEDSKKRPGQYRKASE. A compositionally biased stretch (acidic residues) spans 194 to 203; that stretch reads QQDDQDQQET. The tract at residues 648–669 is disordered; it reads EDLQKSHSSSSSSSESSDSDRE. Over residues 653-663 the composition is skewed to low complexity; that stretch reads SHSSSSSSSES.

The protein belongs to the mitochondrion-specific ribosomal protein mS39 family.

It localises to the mitochondrion. Mitochondrial protein that may have a role in mitochondrial translation. This is Small ribosomal subunit protein mS39 (ptcd3) from Xenopus laevis (African clawed frog).